Consider the following 374-residue polypeptide: C-X-C chemokine receptor type 5 (374 aa).

Residues 1 to 57 (MNSPISLDMGAITYNMDDLYKELAIYSNSTEIPLQDSIFCSTEEGPLLTSFKTIFMP) are Extracellular-facing. A glycan (N-linked (GlcNAc...) asparagine) is linked at asparagine 28. The chain crosses the membrane as a helical span at residues 58-78 (VAYSLIFLLGMMGNILVLVIL). At 79–90 (ERHRHTRSSTET) the chain is on the cytoplasmic side. Residues 91–111 (FLFHLAVADLLLVFILPFAVA) traverse the membrane as a helical segment. The Extracellular portion of the chain corresponds to 112 to 126 (EGSVGWVLGTFLCKT). Cysteine 124 and cysteine 204 are disulfide-bonded. The helical transmembrane segment at 127–147 (VIALHKINFYCSSLLLACIAV) threads the bilayer. Over 148 to 169 (DRYLAIVHAVHAYRRRRLLSIH) the chain is Cytoplasmic. A helical membrane pass occupies residues 170–190 (ITCSTIWLAGFLFALPELLFA). Over 191-221 (KVVQPHNNESLPQCIFSQENEAETRAWFASR) the chain is Extracellular. Residue asparagine 198 is glycosylated (N-linked (GlcNAc...) asparagine). A helical membrane pass occupies residues 222 to 242 (FLYHTGGFLLPMLVMAWCYVG). Residues 243-261 (VVHRLLQAQRRPQRQKAVR) lie on the Cytoplasmic side of the membrane. A helical membrane pass occupies residues 262–282 (VAILVTSIFLLCWSPYHIVIF). Topologically, residues 283-306 (LDTLERLKAVNSSCELSGYLSVAI) are extracellular. Residues 307–327 (TLCEFLGLAHCCLNPMLYTFA) form a helical membrane-spanning segment. Residues 328–374 (GVKFRSDLSRLLTKLGCAGPASLCQLFPGWRKSSLSESENATSLTTF) lie on the Cytoplasmic side of the membrane.

The protein belongs to the G-protein coupled receptor 1 family. Expressed in neuronal and lymphatic tissue.

It is found in the cell membrane. Functionally, cytokine receptor that binds to B-lymphocyte chemoattractant (BLC). Involved in B-cell migration into B-cell follicles of spleen and Peyer patches but not into those of mesenteric or peripheral lymph nodes. This is C-X-C chemokine receptor type 5 (Cxcr5) from Rattus norvegicus (Rat).